The sequence spans 282 residues: Epoxide hydrolase LasB (282 aa).

Positions 1–133 are lsd19A; the sequence is MPAETVRKEV…TDSSWTARPA (133 aa). Residue Y14 coordinates substrate. The active-site Proton acceptor; for 5-exo epoxide-opening cyclization activity is the D38. Substrate contacts are provided by E65 and H146. A lsd19B region spans residues 134–282; sequence PDEERRKELA…TDVSLLDPAA (149 aa). The active-site Proton acceptor; for 6-endo epoxide-opening cyclization activity is D170. R177, E197, and Y251 together coordinate substrate.

Functionally, epoxide hydrolase responsible for the double epoxide-opening cyclization of bisepoxyprelasalocid A to form lasalocid A, a polyether antibiotic. In vitro, accepts various substrate analogs differing in the left segment of lasalocid and epoxide stereochemistry to afford products with excellent regioselectivity. This is Epoxide hydrolase LasB (lsd19) from Streptomyces lasalocidi (Streptomyces lasaliensis).